The primary structure comprises 430 residues: Keratin, type I cytoskeletal 18 (430 aa).

Serine 2 is subject to N-acetylserine. The interval 2 to 79 (SFTTRSTFST…GLAGMGGIQN (78 aa)) is head. Serine 7, serine 10, serine 15, and serine 18 each carry phosphoserine. A phosphoserine; alternate mark is found at serine 30 and serine 31. O-linked (GlcNAc) serine; alternate glycosylation is found at serine 30 and serine 31. Serine 34 carries the phosphoserine; by CDK1 modification. Residue tyrosine 36 is modified to Phosphotyrosine. Serine 42 is modified (phosphoserine). Arginine 45 carries the omega-N-methylarginine modification. Serine 49 is subject to Phosphoserine; alternate. O-linked (GlcNAc) serine; alternate glycosylation occurs at serine 49. A Phosphoserine; by MAPKAPK2 and MAPKAPK3 modification is found at serine 51. A Phosphothreonine modification is found at threonine 52. Residue serine 53 is modified to Phosphoserine; by CAMK, PKC/PRKCE and AURKA. An Omega-N-methylarginine modification is found at arginine 55. The residue at position 60 (serine 60) is a Phosphoserine. Phosphothreonine is present on threonine 65. The segment at 70-373 (GLAGMGGIQN…EALLNIKVKL (304 aa)) is necessary for interaction with PNN. The interval 77–128 (IQNEKETMQSLNDRLASYLDRVRSLETENRRLESKIREHLEKKGPQVRDWSH) is interaction with TRADD. The tract at residues 80-115 (EKETMQSLNDRLASYLDRVRSLETENRRLESKIREH) is coil 1A. One can recognise an IF rod domain in the interval 80-391 (EKETMQSLND…RLLEDGEDFN (312 aa)). Residue lysine 81 forms a Glycyl lysine isopeptide (Lys-Gly) (interchain with G-Cter in SUMO2) linkage. A phosphoserine mark is found at serine 93 and serine 100. The segment at 116–132 (LEKKGPQVRDWSHYFKI) is linker 1. Lysine 131 carries the post-translational modification N6-acetyllysine. The tract at residues 133-224 (IEDLRAQIFA…KNHEEEVKGL (92 aa)) is coil 1B. The residue at position 177 (serine 177) is a Phosphoserine. Positions 225–248 (QAQIASSGLTVEVDAPKSQDLAKI) are linker 12. The interaction with DNAJB6 stretch occupies residues 243-391 (QDLAKIMADI…RLLEDGEDFN (149 aa)). Lysine 247 is covalently cross-linked (Glycyl lysine isopeptide (Lys-Gly) (interchain with G-Cter in SUMO2)). Residues 249 to 387 (MADIRAQYDE…ATYRRLLEDG (139 aa)) are coil 2. Phosphothreonine is present on threonine 302. A phosphoserine mark is found at serine 305, serine 319, and serine 323. Residues lysine 370 and lysine 372 each participate in a glycyl lysine isopeptide (Lys-Gly) (interchain with G-Cter in SUMO2) cross-link. Residues 388–430 (EDFNLGDALDSSNSMQTIQKTTTRRIVDGKVVSETNDTKVLRH) form a tail region. Phosphoserine occurs at positions 398, 399, and 401. Threonine 404 is modified (phosphothreonine). A Glycyl lysine isopeptide (Lys-Gly) (interchain with G-Cter in SUMO2) cross-link involves residue lysine 417. The residue at position 426 (lysine 426) is an N6-acetyllysine; alternate. Lysine 426 is covalently cross-linked (Glycyl lysine isopeptide (Lys-Gly) (interchain with G-Cter in SUMO1); alternate). Lysine 426 is covalently cross-linked (Glycyl lysine isopeptide (Lys-Gly) (interchain with G-Cter in SUMO2); alternate).

It belongs to the intermediate filament family. As to quaternary structure, heterotetramer of two type I and two type II keratins. KRT18 associates with KRT8. Interacts with PLEC isoform 1C, when in a heterodimer with KRT8. Interacts with the thrombin-antithrombin complex. Interacts with PNN and mutated CFTR. Interacts with YWHAE, YWHAH and YWHAZ only when phosphorylated. Interacts with DNAJB6, TCHP and TRADD. Interacts with FAM83H. Interacts with EPPK1. Interacts with PKP1 and PKP2. In terms of assembly, (Microbial infection) Interacts with hepatitis C virus/HCV core protein. Phosphorylation at Ser-34 increases during mitosis. Hyperphosphorylated at Ser-53 in diseased cirrhosis liver. Phosphorylation increases by IL-6. Post-translationally, proteolytically cleaved by caspases during epithelial cell apoptosis. Cleavage occurs at Asp-238 by either caspase-3, caspase-6 or caspase-7. In terms of processing, O-GlcNAcylation increases solubility, and decreases stability by inducing proteasomal degradation. Expressed in colon, placenta, liver and very weakly in exocervix. Increased expression observed in lymph nodes of breast carcinoma.

It is found in the nucleus matrix. The protein resides in the cytoplasm. The protein localises to the perinuclear region. It localises to the nucleus. Its subcellular location is the nucleolus. Involved in the uptake of thrombin-antithrombin complexes by hepatic cells. When phosphorylated, plays a role in filament reorganization. Involved in the delivery of mutated CFTR to the plasma membrane. Together with KRT8, is involved in interleukin-6 (IL-6)-mediated barrier protection. This Homo sapiens (Human) protein is Keratin, type I cytoskeletal 18 (KRT18).